The sequence spans 764 residues: MLLFVLTCLLAVFPAISTKSPIFGPEEVNSVEGNSVSITCYYPPTSVNRHTRKYWCRQGARGGCITLISSEGYVSSKYAGRANLTNFPENGTFVVNIAQLSQDDSGRYKCGLGINSRGLSFDVSLEVSQGPGLLNDTKVYTVDLGRTVTINCPFKTENAQKRKSLYKQIGLYPVLVIDSSGYVNPNYTGRIRLDIQGTGQLLFSVVINQLRLSDAGQYLCQAGDDSNSNKKNADLQVLKPEPELVYEDLRGSVTFHCALGPEVANVAKFLCRQSSGENCDVVVNTLGKRAPAFEGRILLNPQDKDGSFSVVITGLRKEDAGRYLCGAHSDGQLQEGSPIQAWQLFVNEESTIPRSPTVVKGVAGGSVAVLCPYNRKESKSIKYWCLWEGAQNGRCPLLVDSEGWVKAQYEGRLSLLEEPGNGTFTVILNQLTSRDAGFYWCLTNGDTLWRTTVEIKIIEGEPNLKVPGNVTAVLGETLKVPCHFPCKFSSYEKYWCKWNNTGCQALPSQDEGPSKAFVNCDENSRLVSLTLNLVTRADEGWYWCGVKQGHFYGETAAVYVAVEERKAAGSRDVSLAKADAAPDEKVLDSGFREIENKAIQDPRLFAEEKAVADTRDQADGSRASVDSGSSEEQGGSSRALVSTLVPLGLVLAVGAVAVGVARARHRKNVDRVSIRSYRTDISMSDFENSREFGANDNMGASSITQETSLGGKEEFVATTESTTETKEPKKAKRSSKEEAEMAYKDFLLQSSTVAAEAQDGPQEA.

Residues 1 to 18 (MLLFVLTCLLAVFPAIST) form the signal peptide. In terms of domain architecture, Ig-like V-type 1; required for binding to polymeric IgA and IgM spans 19–120 (KSPIFGPEEV…GLGINSRGLS (102 aa)). Residues 19–638 (KSPIFGPEEV…SSEEQGGSSR (620 aa)) are Extracellular-facing. 2 disulfide bridges follow: Cys40-Cys110 and Cys56-Cys64. Residues Asn83, Asn90, Asn135, and Asn186 are each glycosylated (N-linked (GlcNAc...) asparagine). 4 consecutive Ig-like V-type domains span residues 145 to 237 (GRTV…DLQV), 250 to 352 (RGSV…ESTI), 364 to 458 (GGSV…IKII), and 462 to 561 (PNLK…VYVA). 5 cysteine pairs are disulfide-bonded: Cys152–Cys220, Cys257–Cys325, Cys271–Cys279, Cys371–Cys441, and Cys385–Cys395. A glycan (N-linked (GlcNAc...) asparagine) is linked at Asn421. An N-linked (GlcNAc...) (complex) asparagine glycan is attached at Asn469. Cystine bridges form between Cys482/Cys544, Cys486/Cys520, and Cys496/Cys503. Residue Asn499 is glycosylated (N-linked (GlcNAc...) asparagine). The segment covering 609-619 (KAVADTRDQAD) has biased composition (basic and acidic residues). A disordered region spans residues 609-637 (KAVADTRDQADGSRASVDSGSSEEQGGSS). Over residues 627–637 (SGSSEEQGGSS) the composition is skewed to low complexity. A helical transmembrane segment spans residues 639-661 (ALVSTLVPLGLVLAVGAVAVGVA). At 662 to 764 (RARHRKNVDR…AEAQDGPQEA (103 aa)) the chain is on the cytoplasmic side. Residues Ser673, Ser682, Ser689, and Ser735 each carry the phosphoserine modification. The interval 717–738 (ATTESTTETKEPKKAKRSSKEE) is disordered. Positions 723 to 738 (TETKEPKKAKRSSKEE) are enriched in basic and acidic residues.

Interacts (mainly via CDR1-like domain) with dimeric IgA. Interacts (mainly via CDR2-like domain) with pentameric IgM. In terms of assembly, either free or part of the secretory IgA (sIgA) complex that consists of two, four or five IgA monomers, and two additional non-Ig polypeptides, namely the JCHAIN and the secretory component (the proteolytic product of PIGR). Free secretory component interacts with bacterial antigens toxA of C.difficile and eaeA of E.coli. In terms of processing, N-glycosylated. N-glycosylation is required for anchoring IgA molecules to mucus, but is not necessary for Ig binding.

It is found in the cell membrane. Its subcellular location is the secreted. In terms of biological role, mediates selective transcytosis of polymeric IgA and IgM across mucosal epithelial cells. Binds polymeric IgA and IgM at the basolateral surface of epithelial cells. The complex is then transported across the cell to be secreted at the apical surface. During this process, a cleavage occurs that separates the extracellular (known as the secretory component) from the transmembrane segment. Functionally, through its N-linked glycans ensures anchoring of secretory IgA (sIgA) molecules to mucus lining the epithelial surface to neutralize extracellular pathogens. On its own (free form) may act as a non-specific microbial scavenger to prevent pathogen interaction with epithelial cells. This Homo sapiens (Human) protein is Polymeric immunoglobulin receptor (PIGR).